We begin with the raw amino-acid sequence, 542 residues long: Glucose-6-phosphate isomerase (542 aa).

The Proton donor role is filled by Glu-353. Catalysis depends on residues His-384 and Lys-508.

The protein belongs to the GPI family.

The protein resides in the cytoplasm. It catalyses the reaction alpha-D-glucose 6-phosphate = beta-D-fructose 6-phosphate. It functions in the pathway carbohydrate biosynthesis; gluconeogenesis. Its pathway is carbohydrate degradation; glycolysis; D-glyceraldehyde 3-phosphate and glycerone phosphate from D-glucose: step 2/4. Its function is as follows. Catalyzes the reversible isomerization of glucose-6-phosphate to fructose-6-phosphate. The protein is Glucose-6-phosphate isomerase of Corynebacterium efficiens (strain DSM 44549 / YS-314 / AJ 12310 / JCM 11189 / NBRC 100395).